Reading from the N-terminus, the 297-residue chain is Ectoine dioxygenase (297 aa).

An L-ectoine-binding site is contributed by glutamine 131. Lysine 137 is a 2-oxoglutarate binding site. Fe cation is bound by residues histidine 148, aspartate 150, and histidine 249.

It belongs to the PhyH family. EctD subfamily. In terms of assembly, homodimer. Fe(2+) serves as cofactor.

It carries out the reaction L-ectoine + 2-oxoglutarate + O2 = 5-hydroxyectoine + succinate + CO2. In terms of biological role, involved in the biosynthesis of 5-hydroxyectoine, called compatible solute, which helps organisms to survive extreme osmotic stress by acting as a highly soluble organic osmolyte. Catalyzes the 2-oxoglutarate-dependent selective hydroxylation of L-ectoine to yield (4S,5S)-5-hydroxyectoine. The polypeptide is Ectoine dioxygenase (Streptomyces anulatus (Streptomyces chrysomallus)).